The chain runs to 241 residues: tRNA (guanine-N(1)-)-methyltransferase (241 aa).

S-adenosyl-L-methionine-binding positions include G123 and 143-148; that span reads IGDYVL.

It belongs to the RNA methyltransferase TrmD family. As to quaternary structure, homodimer.

It is found in the cytoplasm. It carries out the reaction guanosine(37) in tRNA + S-adenosyl-L-methionine = N(1)-methylguanosine(37) in tRNA + S-adenosyl-L-homocysteine + H(+). Specifically methylates guanosine-37 in various tRNAs. This Roseobacter denitrificans (strain ATCC 33942 / OCh 114) (Erythrobacter sp. (strain OCh 114)) protein is tRNA (guanine-N(1)-)-methyltransferase.